Reading from the N-terminus, the 287-residue chain is Aquaporin PIP2-1 (287 aa).

Position 1 is an N-acetylmethionine (Met1). Residues Ala2–Arg39 lie on the Cytoplasmic side of the membrane. Position 3 is an N6,N6-dimethyllysine; partial (Lys3). A helical transmembrane segment spans residues Ala40–Ile60. Residues Gly61–Ile83 are Extracellular-facing. The helical transmembrane segment at Ala84–Gly104 threads the bilayer. At His105–Ala125 the chain is on the cytoplasmic side. The NPA 1 motif lies at Asn107–Ala109. A helical transmembrane segment spans residues Leu126–Phe146. Residues Gln147–Thr167 lie on the Extracellular side of the membrane. Residues Gly168–Ala188 traverse the membrane as a helical segment. The Cytoplasmic segment spans residues Thr189–Pro201. The chain crosses the membrane as a helical span at residues Val202–Ile222. Over Thr223–Trp249 the chain is Extracellular. The short motif at Asn228–Ala230 is the NPA 2 element. The helical transmembrane segment at Ile250–Leu270 threads the bilayer. Over Arg271 to Val287 the chain is Cytoplasmic. 2 positions are modified to phosphoserine: Ser280 and Ser283.

This sequence belongs to the MIP/aquaporin (TC 1.A.8) family. PIP (TC 1.A.8.11) subfamily. Post-translationally, ubiquitinated by RMA1, leading to proteasomal degradation. In terms of processing, the phosphorylation at Ser-280 and Ser-283 is altered by salt (NaCl) and hydrogen peroxide H(2)O(2) treatments. Phosphorylation of Ser-283 is required for plasma membrane targeting. As to expression, predominantly expressed in roots and green siliques. Also expressed at lower level above ground and in flower buds.

The protein resides in the cell membrane. Water channel required to facilitate the transport of water across cell membrane. Probably involved in root water uptake. Its function is impaired by Hg(2+). This chain is Aquaporin PIP2-1 (PIP2-1), found in Arabidopsis thaliana (Mouse-ear cress).